Reading from the N-terminus, the 103-residue chain is UPF0145 protein Rsph17025_2361 (103 aa).

The protein belongs to the UPF0145 family.

The chain is UPF0145 protein Rsph17025_2361 from Cereibacter sphaeroides (strain ATCC 17025 / ATH 2.4.3) (Rhodobacter sphaeroides).